Here is a 357-residue protein sequence, read N- to C-terminus: Red-sensitive opsin (357 aa).

At 1-49 (MGDQWGDAVFAARRRGDDTTREAAFTYTNSNNTKDPFEGPNYHIAPRWV) the chain is on the extracellular side. N-linked (GlcNAc...) asparagine glycosylation is present at N31. A helical membrane pass occupies residues 50-74 (YNLATCWMFFVVVASTVTNGLVLVA). The Cytoplasmic segment spans residues 75-86 (SAKFKKLRHPLN). Residues 87 to 112 (WILVNLAIADLLETLLASTISVCNQF) form a helical membrane-spanning segment. Topologically, residues 113–126 (FGYFILGHPMCVFE) are extracellular. A disulfide bridge connects residues C123 and C200. Residues 127–146 (GFTVATCGIAGLWSLTVISW) form a helical membrane-spanning segment. Residues 147–165 (ERWVVVCKPFGNVKFDGKM) are Cytoplasmic-facing. The helical transmembrane segment at 166–189 (ATAGIVFTWVWSAVWCAPPIFGWS) threads the bilayer. Residues 190 to 215 (RYWPHGLKTSCGPDVFSGSEDPGVQS) are Extracellular-facing. The chain crosses the membrane as a helical span at residues 216–243 (YMIVLMITCCFIPLGIIILCYIAVWWAI). Residues 244–265 (RTVAQQQKDSESTQKAEKEVSR) are Cytoplasmic-facing. The helical transmembrane segment at 266–289 (MVVVMIMAYCFCWGPYTFFACFAA) threads the bilayer. Topologically, residues 290-297 (ANPGYAFH) are extracellular. The helical transmembrane segment at 298–322 (PLAAAMPAYFAKSATIYNPVIYVFM) threads the bilayer. K309 bears the N6-(retinylidene)lysine mark. The Cytoplasmic portion of the chain corresponds to 323–357 (NRQFRVCIMQLFGKKVDDGSEVSTSKTEVSSVAPA).

This sequence belongs to the G-protein coupled receptor 1 family. Opsin subfamily. Post-translationally, phosphorylated on some or all of the serine and threonine residues present in the C-terminal region. In terms of tissue distribution, the color pigments are found in the cone photoreceptor cells.

It is found in the membrane. Visual pigments are the light-absorbing molecules that mediate vision. They consist of an apoprotein, opsin, covalently linked to cis-retinal. This is Red-sensitive opsin (R007) from Psalidodon fasciatus (Banded astyanax).